The primary structure comprises 306 residues: N-acetylmuramic acid 6-phosphate etherase (306 aa).

Residues 60-223 (TAAALRGGGR…STGAMVRLGK (164 aa)) form the SIS domain. Glutamate 88 acts as the Proton donor in catalysis. The active site involves glutamate 119.

Belongs to the GCKR-like family. MurNAc-6-P etherase subfamily. Homodimer.

The catalysed reaction is N-acetyl-D-muramate 6-phosphate + H2O = N-acetyl-D-glucosamine 6-phosphate + (R)-lactate. It participates in amino-sugar metabolism; N-acetylmuramate degradation. In terms of biological role, specifically catalyzes the cleavage of the D-lactyl ether substituent of MurNAc 6-phosphate, producing GlcNAc 6-phosphate and D-lactate. The chain is N-acetylmuramic acid 6-phosphate etherase from Gloeobacter violaceus (strain ATCC 29082 / PCC 7421).